Here is a 417-residue protein sequence, read N- to C-terminus: Serine hydroxymethyltransferase (417 aa).

(6S)-5,6,7,8-tetrahydrofolate contacts are provided by residues Leu121 and 125 to 127 (GHL). N6-(pyridoxal phosphate)lysine is present on Lys229. 355 to 357 (SPF) contacts (6S)-5,6,7,8-tetrahydrofolate.

Belongs to the SHMT family. In terms of assembly, homodimer. The cofactor is pyridoxal 5'-phosphate.

The protein resides in the cytoplasm. The catalysed reaction is (6R)-5,10-methylene-5,6,7,8-tetrahydrofolate + glycine + H2O = (6S)-5,6,7,8-tetrahydrofolate + L-serine. Its pathway is one-carbon metabolism; tetrahydrofolate interconversion. It participates in amino-acid biosynthesis; glycine biosynthesis; glycine from L-serine: step 1/1. Catalyzes the reversible interconversion of serine and glycine with tetrahydrofolate (THF) serving as the one-carbon carrier. This reaction serves as the major source of one-carbon groups required for the biosynthesis of purines, thymidylate, methionine, and other important biomolecules. Also exhibits THF-independent aldolase activity toward beta-hydroxyamino acids, producing glycine and aldehydes, via a retro-aldol mechanism. The polypeptide is Serine hydroxymethyltransferase (Tolumonas auensis (strain DSM 9187 / NBRC 110442 / TA 4)).